Here is a 217-residue protein sequence, read N- to C-terminus: MKLILLGAPGAGKGTQATFISKQFGIPQISTGDMLRAQVKAGTALGLEAKKHMDAGGLVPDAVIIGMVKDRLTQDDCKNGYLFDGFPRTIPQAQAMKDAGVPIEFVLEIDVPDSDIVERMAGRRAHLASGRTYHVKFNPPKVEGIDDVTGEPLVQRDDDKEETVKKRLEIYHSQTKPLVDFYGKWAAEGDAKAPKVRKVAGVGSVDNITKSVFEALK.

10-15 (GAGKGT) is a binding site for ATP. Positions 30–59 (STGDMLRAQVKAGTALGLEAKKHMDAGGLV) are NMP. AMP contacts are provided by residues Thr-31, Arg-36, 57–59 (GLV), 85–88 (GFPR), and Gln-92. Residues 122–159 (GRRAHLASGRTYHVKFNPPKVEGIDDVTGEPLVQRDDD) are LID. ATP-binding positions include Arg-123 and 132 to 133 (TY). Residues Arg-156 and Arg-167 each contribute to the AMP site. Gly-203 provides a ligand contact to ATP.

This sequence belongs to the adenylate kinase family. As to quaternary structure, monomer.

Its subcellular location is the cytoplasm. It catalyses the reaction AMP + ATP = 2 ADP. It participates in purine metabolism; AMP biosynthesis via salvage pathway; AMP from ADP: step 1/1. In terms of biological role, catalyzes the reversible transfer of the terminal phosphate group between ATP and AMP. Plays an important role in cellular energy homeostasis and in adenine nucleotide metabolism. This is Adenylate kinase from Dechloromonas aromatica (strain RCB).